A 230-amino-acid chain; its full sequence is Flagellar L-ring protein (230 aa).

Positions 1–18 are cleaved as a signal peptide; the sequence is MNRLNIAVSCLATALLFG. The N-palmitoyl cysteine moiety is linked to residue cysteine 19. Cysteine 19 carries S-diacylglycerol cysteine lipidation.

The protein belongs to the FlgH family. The basal body constitutes a major portion of the flagellar organelle and consists of four rings (L,P,S, and M) mounted on a central rod.

The protein localises to the cell outer membrane. It is found in the bacterial flagellum basal body. Assembles around the rod to form the L-ring and probably protects the motor/basal body from shearing forces during rotation. In Legionella pneumophila (strain Paris), this protein is Flagellar L-ring protein.